Consider the following 858-residue polypeptide: DNA mismatch repair protein MutS (858 aa).

600 to 607 (GPNMSGKS) is an ATP binding site.

The protein belongs to the DNA mismatch repair MutS family.

In terms of biological role, this protein is involved in the repair of mismatches in DNA. It is possible that it carries out the mismatch recognition step. This protein has a weak ATPase activity. The sequence is that of DNA mismatch repair protein MutS from Bacillus pumilus (strain SAFR-032).